The following is a 428-amino-acid chain: Glutamate-1-semialdehyde 2,1-aminomutase (428 aa).

At K267 the chain carries N6-(pyridoxal phosphate)lysine.

It belongs to the class-III pyridoxal-phosphate-dependent aminotransferase family. HemL subfamily. As to quaternary structure, homodimer. Requires pyridoxal 5'-phosphate as cofactor.

The protein localises to the cytoplasm. It catalyses the reaction (S)-4-amino-5-oxopentanoate = 5-aminolevulinate. Its pathway is porphyrin-containing compound metabolism; protoporphyrin-IX biosynthesis; 5-aminolevulinate from L-glutamyl-tRNA(Glu): step 2/2. It functions in the pathway porphyrin-containing compound metabolism; chlorophyll biosynthesis. In Prochlorococcus marinus (strain NATL1A), this protein is Glutamate-1-semialdehyde 2,1-aminomutase.